The following is a 402-amino-acid chain: Protein kinase US3 homolog (402 aa).

Disordered stretches follow at residues 1-21 (MSSSPEAETMECGISSSKVHD) and 46-88 (FPDS…SPET). Positions 102 to 386 (YNIVSSLSPG…AQDILMLPLF (285 aa)) constitute a Protein kinase domain. ATP contacts are provided by residues 108–116 (LSPGSEGYI) and K129. Catalysis depends on D218, which acts as the Proton acceptor.

Belongs to the protein kinase superfamily. Ser/Thr protein kinase family. Post-translationally, phosphorylated by UL13 homolog; this phosphorylation regulates subsequent phosphorylation of UL31 and UL34 homologs by US3. Autophosphorylated.

It is found in the host cytoplasm. Its subcellular location is the host nucleus. It catalyses the reaction L-seryl-[protein] + ATP = O-phospho-L-seryl-[protein] + ADP + H(+). The catalysed reaction is L-threonyl-[protein] + ATP = O-phospho-L-threonyl-[protein] + ADP + H(+). Functionally, multifunctional serine/threonine kinase that plays a role in several processes including egress of virus particles from the nucleus, modulation of the actin cytoskeleton and inhibition of apoptosis. Phosphorylates UL31 and UL34 homologs, two critical regulators of capsid budding from nucleus to endoplasmic reticulum, thereby facilitating virion egress. Modulates and redistributes host components of the nuclear envelope, including LMNA, emerin/EMD and the nuclear matrix protein MATR3. Phosphorylates envelope glycoprotein B (gB), probably to direct it to the cell surface. Promotes virus intracellular spread by restructuring host cell cytoskeleton. Blocks host apoptosis to extend cell survival and allow efficient viral replication. Promotes viral gene expression by phosphorylating host HDAC2 to reduce viral genome silencing. This chain is Protein kinase US3 homolog (MDV092), found in Gallus gallus (Chicken).